The following is a 355-amino-acid chain: Serine acetyltransferase 4 (355 aa).

Belongs to the transferase hexapeptide repeat family. As to quaternary structure, homomultimer. As to expression, localized in vascular tissues, particularly in phloem.

The protein localises to the cytoplasm. It catalyses the reaction L-serine + acetyl-CoA = O-acetyl-L-serine + CoA. It functions in the pathway amino-acid biosynthesis; L-cysteine biosynthesis; L-cysteine from L-serine: step 1/2. With respect to regulation, feedback inhibitions by L-Ser and acetyl-CoA. This chain is Serine acetyltransferase 4, found in Arabidopsis thaliana (Mouse-ear cress).